The sequence spans 94 residues: RING finger protein Z (94 aa).

The tract at residues 1 to 22 (MGNCNKPPKRPPNTQTSAAQPS) is disordered. Residue Gly2 is the site of N-myristoyl glycine; by host attachment. The RING-type; atypical zinc-finger motif lies at 39–75 (CKCCWFADTNLITCNDHYLCLRCHQTMLRNSELCHIC). Positions 89–92 (PSAP) match the PTAP/PSAP motif motif.

This sequence belongs to the arenaviridae Z protein family. Interacts with protein NP; this interaction probably directs the encapsidated genome to budding sites. Interacts (via RING domain) with polymerase L; this interaction inhibits viral transcription and replication, Z partially blocks the product exit tunnel for the releasing nascent RNA product. Interacts with the glycoprotein complex; this interaction plays a role in virion budding. Interacts with host eIF4E; this interaction results in eIF4E reduced affinity for its substrate, the 5'-m7 G cap structure. Interacts (via late-budding domain) with host TSG101; this interaction is essential for budding and release of viral particles. Interacts with host RPLP0; this interaction may serve to load ribosome-like particles inside the virion. Interacts with host PML; this interaction induces PML bodies redistribution in the cytoplasm upon viral infection. In terms of processing, myristoylation is required for the role of RING finger protein Z in assembly and budding.

The protein localises to the virion. It localises to the host cytoplasm. The protein resides in the host perinuclear region. Its subcellular location is the host cell membrane. Functionally, plays a crucial role in virion assembly and budding. Expressed late in the virus life cycle, it acts as an inhibitor of viral transcription and RNA synthesis by interacting with the viral polymerase L. Presumably recruits the NP encapsidated genome to cellular membranes at budding sites via direct interaction with NP. Plays critical roles in the final steps of viral release by interacting with host TSG101, a member of the vacuolar protein-sorting pathway and using other cellular host proteins involved in vesicle formation pathway. The budding of the virus progeny occurs after association of protein Z with the viral glycoprotein complex SSP-GP1-GP2 at the cell periphery, step that requires myristoylation of protein Z. Also selectively represses protein production by associating with host eIF4E. In cell-based minigenome assay, has an inhibitory effect on the ribonucleoprotein machinery (vRNP), which is responsible for the replication and transcription of the viral genome. This Calomys callosus (Large vesper mouse) protein is RING finger protein Z.